A 77-amino-acid chain; its full sequence is Protein OPG195 (77 aa).

The first 17 residues, 1 to 17 (MRSLIIVLLFPSIIYSM), serve as a signal peptide directing secretion.

The protein belongs to the chordopoxvirinae B9 protein family.

This Homo sapiens (Human) protein is Protein OPG195 (OPG197).